The primary structure comprises 45 residues: Large ribosomal subunit protein bL34 (45 aa).

The protein belongs to the bacterial ribosomal protein bL34 family.

In Clavibacter michiganensis subsp. michiganensis (strain NCPPB 382), this protein is Large ribosomal subunit protein bL34.